The sequence spans 423 residues: Glutamyl-tRNA reductase (423 aa).

Substrate-binding positions include 49–52 (TCNR), S109, 114–116 (EGQ), and Q120. C50 (nucleophile) is an active-site residue. 189-194 (GAGETG) provides a ligand contact to NADP(+).

Belongs to the glutamyl-tRNA reductase family. Homodimer.

The enzyme catalyses (S)-4-amino-5-oxopentanoate + tRNA(Glu) + NADP(+) = L-glutamyl-tRNA(Glu) + NADPH + H(+). It participates in porphyrin-containing compound metabolism; protoporphyrin-IX biosynthesis; 5-aminolevulinate from L-glutamyl-tRNA(Glu): step 1/2. It functions in the pathway porphyrin-containing compound metabolism; chlorophyll biosynthesis. Catalyzes the NADPH-dependent reduction of glutamyl-tRNA(Glu) to glutamate 1-semialdehyde (GSA). This Chlorobium limicola (strain DSM 245 / NBRC 103803 / 6330) protein is Glutamyl-tRNA reductase.